The primary structure comprises 205 residues: Small ribosomal subunit protein uS5 (205 aa).

The S5 DRBM domain occupies 49–112; that stretch reads LEDEVLDIAM…TKAKMNLVKV (64 aa).

Belongs to the universal ribosomal protein uS5 family. Part of the 30S ribosomal subunit. Contacts protein S4.

With S4 and S12 plays an important role in translational accuracy. This Methanoregula boonei (strain DSM 21154 / JCM 14090 / 6A8) protein is Small ribosomal subunit protein uS5.